A 240-amino-acid chain; its full sequence is Uridylate kinase (240 aa).

Residue 12–15 (KISG) participates in ATP binding. The segment at 20–25 (GNQGFG) is involved in allosteric activation by GTP. A UMP-binding site is contributed by Gly-54. ATP is bound by residues Gly-55 and Arg-59. Residues Asp-74 and 135 to 142 (TGNPYFST) contribute to the UMP site. Residues Tyr-168 and Asp-171 each coordinate ATP.

The protein belongs to the UMP kinase family. Homohexamer.

It localises to the cytoplasm. The enzyme catalyses UMP + ATP = UDP + ADP. It participates in pyrimidine metabolism; CTP biosynthesis via de novo pathway; UDP from UMP (UMPK route): step 1/1. With respect to regulation, allosterically activated by GTP. Inhibited by UTP. In terms of biological role, catalyzes the reversible phosphorylation of UMP to UDP. This chain is Uridylate kinase, found in Moorella thermoacetica (strain ATCC 39073 / JCM 9320).